A 245-amino-acid polypeptide reads, in one-letter code: Phycoerythrobilin:ferredoxin oxidoreductase (245 aa).

This sequence belongs to the HY2 family.

The enzyme catalyses (3Z)-phycoerythrobilin + oxidized 2[4Fe-4S]-[ferredoxin] = 15,16-dihydrobiliverdin + reduced 2[4Fe-4S]-[ferredoxin] + 2 H(+). Its function is as follows. Catalyzes the two-electron reduction of the C2 and C3(1) diene system of 15,16-dihydrobiliverdin. In Gloeobacter violaceus (strain ATCC 29082 / PCC 7421), this protein is Phycoerythrobilin:ferredoxin oxidoreductase (pebB).